Reading from the N-terminus, the 448-residue chain is Probable glycine dehydrogenase (decarboxylating) subunit 1 (448 aa).

The protein belongs to the GcvP family. N-terminal subunit subfamily. As to quaternary structure, the glycine cleavage system is composed of four proteins: P, T, L and H. In this organism, the P 'protein' is a heterodimer of two subunits.

It catalyses the reaction N(6)-[(R)-lipoyl]-L-lysyl-[glycine-cleavage complex H protein] + glycine + H(+) = N(6)-[(R)-S(8)-aminomethyldihydrolipoyl]-L-lysyl-[glycine-cleavage complex H protein] + CO2. In terms of biological role, the glycine cleavage system catalyzes the degradation of glycine. The P protein binds the alpha-amino group of glycine through its pyridoxal phosphate cofactor; CO(2) is released and the remaining methylamine moiety is then transferred to the lipoamide cofactor of the H protein. This chain is Probable glycine dehydrogenase (decarboxylating) subunit 1, found in Listeria monocytogenes serotype 4a (strain HCC23).